Reading from the N-terminus, the 564-residue chain is Proline--tRNA ligase (564 aa).

The protein belongs to the class-II aminoacyl-tRNA synthetase family. ProS type 1 subfamily. As to quaternary structure, homodimer.

The protein resides in the cytoplasm. The enzyme catalyses tRNA(Pro) + L-proline + ATP = L-prolyl-tRNA(Pro) + AMP + diphosphate. Functionally, catalyzes the attachment of proline to tRNA(Pro) in a two-step reaction: proline is first activated by ATP to form Pro-AMP and then transferred to the acceptor end of tRNA(Pro). As ProRS can inadvertently accommodate and process non-cognate amino acids such as alanine and cysteine, to avoid such errors it has two additional distinct editing activities against alanine. One activity is designated as 'pretransfer' editing and involves the tRNA(Pro)-independent hydrolysis of activated Ala-AMP. The other activity is designated 'posttransfer' editing and involves deacylation of mischarged Ala-tRNA(Pro). The misacylated Cys-tRNA(Pro) is not edited by ProRS. The protein is Proline--tRNA ligase of Sulfurihydrogenibium sp. (strain YO3AOP1).